The primary structure comprises 357 residues: Sulfate/thiosulfate import ATP-binding protein CysA (357 aa).

Residues 3-237 (ITIQNLNKHF…PENAFVTEFL (235 aa)) form the ABC transporter domain. An ATP-binding site is contributed by 35-42 (GPSGCGKT).

This sequence belongs to the ABC transporter superfamily. Sulfate/tungstate importer (TC 3.A.1.6) family. The complex is composed of two ATP-binding proteins (CysA), two transmembrane proteins (CysT and CysW) and a solute-binding protein (CysP).

The protein localises to the cell inner membrane. It catalyses the reaction sulfate(out) + ATP + H2O = sulfate(in) + ADP + phosphate + H(+). The enzyme catalyses thiosulfate(out) + ATP + H2O = thiosulfate(in) + ADP + phosphate + H(+). Functionally, part of the ABC transporter complex CysAWTP involved in sulfate/thiosulfate import. Responsible for energy coupling to the transport system. This Neisseria meningitidis serogroup B (strain ATCC BAA-335 / MC58) protein is Sulfate/thiosulfate import ATP-binding protein CysA.